Reading from the N-terminus, the 155-residue chain is Endoribonuclease YbeY (155 aa).

3 residues coordinate Zn(2+): histidine 114, histidine 118, and histidine 124.

This sequence belongs to the endoribonuclease YbeY family. Zn(2+) serves as cofactor.

The protein localises to the cytoplasm. Its function is as follows. Single strand-specific metallo-endoribonuclease involved in late-stage 70S ribosome quality control and in maturation of the 3' terminus of the 16S rRNA. This chain is Endoribonuclease YbeY, found in Escherichia coli O81 (strain ED1a).